The sequence spans 254 residues: Isoprenyl transferase (254 aa).

Residue Asp-23 is part of the active site. Asp-23 serves as a coordination point for Mg(2+). Residues 24-27 (GNGR), Trp-28, Arg-36, His-40, and 68-70 (STE) each bind substrate. Asn-71 serves as the catalytic Proton acceptor. Residues Trp-72, Arg-74, Arg-191, and 197 to 199 (RIS) each bind substrate. Glu-210 lines the Mg(2+) pocket.

This sequence belongs to the UPP synthase family. Homodimer. Mg(2+) is required as a cofactor.

Functionally, catalyzes the condensation of isopentenyl diphosphate (IPP) with allylic pyrophosphates generating different type of terpenoids. In Porphyromonas gingivalis (strain ATCC BAA-308 / W83), this protein is Isoprenyl transferase.